A 165-amino-acid polypeptide reads, in one-letter code: NADPH-dependent 7-cyano-7-deazaguanine reductase (165 aa).

Cys-56 (thioimide intermediate) is an active-site residue. Catalysis depends on Asp-63, which acts as the Proton donor. Substrate is bound by residues 78-80 and 97-98; these read VES and HE.

Belongs to the GTP cyclohydrolase I family. QueF type 1 subfamily.

Its subcellular location is the cytoplasm. It carries out the reaction 7-aminomethyl-7-carbaguanine + 2 NADP(+) = 7-cyano-7-deazaguanine + 2 NADPH + 3 H(+). Its pathway is tRNA modification; tRNA-queuosine biosynthesis. Its function is as follows. Catalyzes the NADPH-dependent reduction of 7-cyano-7-deazaguanine (preQ0) to 7-aminomethyl-7-deazaguanine (preQ1). The protein is NADPH-dependent 7-cyano-7-deazaguanine reductase of Bacillus cereus (strain ATCC 14579 / DSM 31 / CCUG 7414 / JCM 2152 / NBRC 15305 / NCIMB 9373 / NCTC 2599 / NRRL B-3711).